The following is a 259-amino-acid chain: Probable transcriptional regulatory protein Noca_2383 (259 aa).

It belongs to the TACO1 family.

The protein localises to the cytoplasm. The polypeptide is Probable transcriptional regulatory protein Noca_2383 (Nocardioides sp. (strain ATCC BAA-499 / JS614)).